We begin with the raw amino-acid sequence, 950 residues long: 2-oxoglutarate dehydrogenase E1 component (950 aa).

Belongs to the alpha-ketoglutarate dehydrogenase family. In terms of assembly, homodimer. Part of the 2-oxoglutarate dehydrogenase (OGDH) complex composed of E1 (2-oxoglutarate dehydrogenase), E2 (dihydrolipoamide succinyltransferase) and E3 (dihydrolipoamide dehydrogenase); the complex contains multiple copies of the three enzymatic components (E1, E2 and E3). The cofactor is thiamine diphosphate.

The catalysed reaction is N(6)-[(R)-lipoyl]-L-lysyl-[protein] + 2-oxoglutarate + H(+) = N(6)-[(R)-S(8)-succinyldihydrolipoyl]-L-lysyl-[protein] + CO2. In terms of biological role, E1 component of the 2-oxoglutarate dehydrogenase (OGDH) complex which catalyzes the decarboxylation of 2-oxoglutarate, the first step in the conversion of 2-oxoglutarate to succinyl-CoA and CO(2). The polypeptide is 2-oxoglutarate dehydrogenase E1 component (Geobacillus kaustophilus (strain HTA426)).